An 89-amino-acid chain; its full sequence is MHRRVEWMTPTDDAILSLLGPPKQLELRSGDIARNTGYSRRRISDRCTVLVDRGLLFRDDEAGHPYYGLTDFGERYVAGELTVDNLEKA.

Positions Ser29 to Asp52 form a DNA-binding region, H-T-H motif.

In terms of biological role, transcriptional repressor expressed under lysogenic conditions, which specifically binds the host DNA site 'RRGAAG'. The binding occurs cooperatively, probably as 2 copies of a dimer. Possibly prevents RNA polymerase access to the promoters for lytic cell cycle transcription. The protein is Repressor protein (T6) of Halobacterium salinarum (Halobacterium halobium).